A 206-amino-acid polypeptide reads, in one-letter code: Cytochrome c oxidase subunit 3 (206 aa).

5 consecutive transmembrane segments (helical) span residues Phe26–Thr46, Leu68–Phe88, Ala97–Ile117, Leu143–Ile163, and Trp185–Gly205.

The protein belongs to the cytochrome c oxidase subunit 3 family.

The protein localises to the cell membrane. The catalysed reaction is 4 Fe(II)-[cytochrome c] + O2 + 8 H(+)(in) = 4 Fe(III)-[cytochrome c] + 2 H2O + 4 H(+)(out). In Alkalihalophilus pseudofirmus (strain ATCC BAA-2126 / JCM 17055 / OF4) (Bacillus pseudofirmus), this protein is Cytochrome c oxidase subunit 3 (ctaE).